A 219-amino-acid polypeptide reads, in one-letter code: Suppressor-of-stellate-like protein (219 aa).

Positions serine 194 to phenylalanine 219 are disordered. The segment covering serine 204 to phenylalanine 219 has biased composition (polar residues).

It belongs to the casein kinase 2 subunit beta family.

The polypeptide is Suppressor-of-stellate-like protein (Ssl) (Drosophila melanogaster (Fruit fly)).